A 119-amino-acid polypeptide reads, in one-letter code: Holo-[acyl-carrier-protein] synthase (119 aa).

Residues aspartate 8 and glutamate 59 each contribute to the Mg(2+) site.

Belongs to the P-Pant transferase superfamily. AcpS family. Requires Mg(2+) as cofactor.

The protein resides in the cytoplasm. The catalysed reaction is apo-[ACP] + CoA = holo-[ACP] + adenosine 3',5'-bisphosphate + H(+). Transfers the 4'-phosphopantetheine moiety from coenzyme A to a Ser of acyl-carrier-protein. The polypeptide is Holo-[acyl-carrier-protein] synthase (Staphylococcus aureus (strain JH1)).